Here is a 380-residue protein sequence, read N- to C-terminus: Cytochrome b (380 aa).

The next 4 membrane-spanning stretches (helical) occupy residues 34–54, 78–99, 114–134, and 179–199; these read FGSL…LLAT, WLIR…YLHI, WNTG…GYVL, and FFAL…IHLT. Heme b-binding residues include His-84 and His-98. Heme b contacts are provided by His-183 and His-197. His-202 contributes to the a ubiquinone binding site. 4 consecutive transmembrane segments (helical) span residues 227–247, 289–309, 321–341, and 348–368; these read LKDI…ALFS, LGGV…PLLH, LSQL…WVGS, and FIII…LLFP.

The protein belongs to the cytochrome b family. The cytochrome bc1 complex contains 11 subunits: 3 respiratory subunits (MT-CYB, CYC1 and UQCRFS1), 2 core proteins (UQCRC1 and UQCRC2) and 6 low-molecular weight proteins (UQCRH/QCR6, UQCRB/QCR7, UQCRQ/QCR8, UQCR10/QCR9, UQCR11/QCR10 and a cleavage product of UQCRFS1). This cytochrome bc1 complex then forms a dimer. The cofactor is heme b.

The protein localises to the mitochondrion inner membrane. In terms of biological role, component of the ubiquinol-cytochrome c reductase complex (complex III or cytochrome b-c1 complex) that is part of the mitochondrial respiratory chain. The b-c1 complex mediates electron transfer from ubiquinol to cytochrome c. Contributes to the generation of a proton gradient across the mitochondrial membrane that is then used for ATP synthesis. The protein is Cytochrome b (MT-CYB) of Uria aalge (Common mure).